A 321-amino-acid chain; its full sequence is Nucleus-vacuole junction protein 1 (321 aa).

Residues 1–22 (MTRPPLVRGIFSLGLSVAVLKG) form the signal peptide. Positions 73–125 (ELSWRKVFNFISRQSSELDTRIYVLILLLSFLLPIAWTVLDGDRETTLEDKDN) are TSC13-binding. A helical transmembrane segment spans residues 94 to 114 (IYVLILLLSFLLPIAWTVLDG). The tract at residues 139–195 (KHYNDGERAVLQFGKNRSEPIILSYKDMNVLEGEHEFTSKEEHSNSHLTSKSENALN) is OSH1-binding. Residues S156 and S199 each carry the phosphoserine modification. Residues 211–275 (LEEDKNEPNG…SLKSSTSFPI (65 aa)) form a disordered region. The VAC8-binding stretch occupies residues 233 to 321 (DCSSSSEVES…EQAYSQPFRY (89 aa)). A compositionally biased stretch (basic and acidic residues) spans 242 to 262 (SQSKCRKESTAEPDSLSRDTR). A compositionally biased stretch (low complexity) spans 263–272 (TTSSLKSSTS). 2 positions are modified to phosphoserine: S285 and S298. The disordered stretch occupies residues 299 to 321 (PTKSSNLDAQVNTEQAYSQPFRY).

In terms of assembly, interacts with OSH1, TSC13 and VAC8.

It is found in the nucleus outer membrane. Involved in the formation of nucleus-vacuole junctions (NVJs) during piecemeal microautophagy of the nucleus (PMN). NVJs are interorganelle interfaces mediated by NVJ1 in the nuclear envelope and VAC8 on the vacuole membrane. Together, NVJ1 and VAC8 form Velcro-like patches through which teardrop-like portions of the nucleus are pinched off into the vacuolar lumen and degraded by the PMN process. Also acts as an outer-nuclear membrane receptor for OSH1 and TSC13. This Saccharomyces cerevisiae (strain ATCC 204508 / S288c) (Baker's yeast) protein is Nucleus-vacuole junction protein 1 (NVJ1).